The primary structure comprises 573 residues: MSVETSSETGNKPDIKPRSRIVTDGIAAAPARGMLRAVGFGDEDFAKPQIGVASSWNEITPCNLSLDRLAKAVKEGVHAGGGFPMIFGTISVSDGISMGHEGMHFSLVSREVIADSVETVMQAERIDGSVLLAGCDKSLPGMLMAAARLNVSSVFLYAGSIMPGWVKLEDGTEKDVTLIDAFEAVGACAAGKMSVGDLDRIERAICPGEGACGGMYTANTMACIGEALGMSLPGSAAPPSADRRRDMFAHRSGEAVVELLRRGIRSRDIMTKEAFENAIAVTMAFGGSTNAVLHLLAIAREAEVDLQLEDFNRIGDKIPHLGDLKPFGRYVMNDVDRVGGVPVIMRALLDAGLLHGDALTVTGKTLAENLEAINPPDLDGKILRALDNPIHKTGGLSVLKGSLAPGGAVVKTAGFDAEVFEGPARVFEREQGALEALKAGEIKAGDVVVIRYEGPKGGPGMREMLAITGAIKGAGLGKDVLLLTDGRFSGGTTGLCIGHVAPEAVDAGPIAFVQDGDLIRVDIPNKSFDLLVDEAELEARKIGWEPLPARFTKGVLAKYAKLVHSASEGAYCG.

C62 contacts [2Fe-2S] cluster. Mg(2+) is bound at residue D94. C135 is a [2Fe-2S] cluster binding site. Mg(2+)-binding residues include D136 and K137. K137 is subject to N6-carboxylysine. A [2Fe-2S] cluster-binding site is contributed by C212. Position 463 (E463) interacts with Mg(2+). The active-site Proton acceptor is the S489.

Belongs to the IlvD/Edd family. In terms of assembly, homodimer. It depends on [2Fe-2S] cluster as a cofactor. Mg(2+) is required as a cofactor.

It catalyses the reaction (2R)-2,3-dihydroxy-3-methylbutanoate = 3-methyl-2-oxobutanoate + H2O. It carries out the reaction (2R,3R)-2,3-dihydroxy-3-methylpentanoate = (S)-3-methyl-2-oxopentanoate + H2O. It functions in the pathway amino-acid biosynthesis; L-isoleucine biosynthesis; L-isoleucine from 2-oxobutanoate: step 3/4. Its pathway is amino-acid biosynthesis; L-valine biosynthesis; L-valine from pyruvate: step 3/4. Functionally, functions in the biosynthesis of branched-chain amino acids. Catalyzes the dehydration of (2R,3R)-2,3-dihydroxy-3-methylpentanoate (2,3-dihydroxy-3-methylvalerate) into 2-oxo-3-methylpentanoate (2-oxo-3-methylvalerate) and of (2R)-2,3-dihydroxy-3-methylbutanoate (2,3-dihydroxyisovalerate) into 2-oxo-3-methylbutanoate (2-oxoisovalerate), the penultimate precursor to L-isoleucine and L-valine, respectively. The chain is Dihydroxy-acid dehydratase from Renibacterium salmoninarum (strain ATCC 33209 / DSM 20767 / JCM 11484 / NBRC 15589 / NCIMB 2235).